The sequence spans 695 residues: Follicle-stimulating hormone receptor (695 aa).

The signal sequence occupies residues 1–17 (MALLLVSLLAFMSLGSG). 2 disulfides stabilise this stretch: Cys-18–Cys-25 and Cys-23–Cys-32. The LRRNT domain occupies 18–46 (CHHRLCHCSNRVFLCQESKVTEIPSDLPR). Over 18-366 (CHHRLCHCSN…EDIMGYNILR (349 aa)) the chain is Extracellular. LRR repeat units follow at residues 49–72 (VELR…FGDL), 73–97 (EKIE…LPNL), 98–118 (HEIR…AFQN), 119–143 (LPNL…KIQS), 144–169 (LQKV…LGLS), 170–192 (SESV…AFNG), 193–216 (TQLD…VFQG), 217–240 (ASGP…GLEN), and 241–259 (LKKL…PSLE). N-linked (GlcNAc...) asparagine glycosylation is found at Asn-191 and Asn-199. Intrachain disulfides connect Cys-275–Cys-346, Cys-276–Cys-292, Cys-276–Cys-356, and Cys-292–Cys-338. N-linked (GlcNAc...) asparagine glycosylation occurs at Asn-293. Tyr-335 bears the Sulfotyrosine mark. A helical transmembrane segment spans residues 367–387 (VLIWFISILAITGNVAVLVVL). The Cytoplasmic portion of the chain corresponds to 388–398 (TTSQYKLTVPR). A helical membrane pass occupies residues 399–421 (FLMCNLAFADLCIGIYLLLIASV). Residues 422-443 (DVHTRTLYHNYAIDWQTGAGCA) are Extracellular-facing. Cys-442 and Cys-517 form a disulfide bridge. Residues 444 to 465 (DCWLFTVFASELSVYTLTAITL) traverse the membrane as a helical segment. Residues 466–485 (ERWHTITHAMQLDCKVQLRH) are Cytoplasmic-facing. Residues 486-508 (AASIMVIGWIFSSAAALFPIFGV) form a helical membrane-spanning segment. The Extracellular segment spans residues 509–528 (SSYMKVSICLPMDIDSPLSQ). The chain crosses the membrane as a helical span at residues 529-550 (LYVMFLLVLNVLAFVVICGCYL). At 551–573 (HIYLTVRNPNIVSSASDTRIAKR) the chain is on the cytoplasmic side. Residues 574–597 (MATLIFTDFLCMAPISFFAISASL) form a helical membrane-spanning segment. Residues 598–608 (KVPLITVSKAK) are Extracellular-facing. The helical transmembrane segment at 609 to 630 (ILLVLFYPINSCANPFLYAIFT) threads the bilayer. Topologically, residues 631-695 (KNFRRDLFIL…LAPLNHLAQN (65 aa)) are cytoplasmic. The interval 658 to 677 (TSSTAHNSHPRNGHSSSVSR) is disordered.

It belongs to the G-protein coupled receptor 1 family. FSH/LSH/TSH subfamily. Homotrimer. Functions as a homotrimer binding the FSH hormone heterodimer composed of CGA and FSHB. Interacts with ARRB2. Interacts with APPL2; interaction is independent of follicle stimulating hormone stimulation. Post-translationally, N-glycosylated; indirectly required for FSH-binding, possibly via a conformational change that allows high affinity binding of hormone. In terms of processing, sulfated.

It localises to the cell membrane. Its function is as follows. G protein-coupled receptor for follitropin, the follicle-stimulating hormone. Through cAMP production activates the downstream PI3K-AKT and ERK1/ERK2 signaling pathways. The polypeptide is Follicle-stimulating hormone receptor (FSHR) (Cavia porcellus (Guinea pig)).